The primary structure comprises 159 residues: Large ribosomal subunit protein uL11 (159 aa).

Positions Met1–Pro26 are disordered.

This sequence belongs to the universal ribosomal protein uL11 family. Part of the ribosomal stalk of the 50S ribosomal subunit. Interacts with L10 and the large rRNA to form the base of the stalk. L10 forms an elongated spine to which L12 dimers bind in a sequential fashion forming a multimeric L10(L12)X complex.

Forms part of the ribosomal stalk which helps the ribosome interact with GTP-bound translation factors. The chain is Large ribosomal subunit protein uL11 from Haloferax volcanii (strain ATCC 29605 / DSM 3757 / JCM 8879 / NBRC 14742 / NCIMB 2012 / VKM B-1768 / DS2) (Halobacterium volcanii).